The following is a 356-amino-acid chain: Uroporphyrinogen decarboxylase (356 aa).

Residues 27 to 31 (RQAGR), Asp-77, Tyr-154, Thr-209, and His-327 each bind substrate.

The protein belongs to the uroporphyrinogen decarboxylase family. In terms of assembly, homodimer.

Its subcellular location is the cytoplasm. It catalyses the reaction uroporphyrinogen III + 4 H(+) = coproporphyrinogen III + 4 CO2. The protein operates within porphyrin-containing compound metabolism; protoporphyrin-IX biosynthesis; coproporphyrinogen-III from 5-aminolevulinate: step 4/4. Its function is as follows. Catalyzes the decarboxylation of four acetate groups of uroporphyrinogen-III to yield coproporphyrinogen-III. This is Uroporphyrinogen decarboxylase from Cellvibrio japonicus (strain Ueda107) (Pseudomonas fluorescens subsp. cellulosa).